Here is a 463-residue protein sequence, read N- to C-terminus: Cytochrome c-552 (463 aa).

Positions 1 to 23 are cleaved as a signal peptide; the sequence is MNVKSIALSAVIATSFLAAGAMA. His-83 provides a ligand contact to heme c. The heme site is built by Cys-111, Cys-114, and Lys-115. Residues Cys-149, Cys-152, His-153, Cys-191, Cys-194, and His-195 each coordinate heme c. Ca(2+) contacts are provided by Glu-197, Tyr-198, Lys-246, and Gln-248. Residue Tyr-198 participates in substrate binding. His-249 contacts substrate. 9 residues coordinate heme c: His-260, Cys-267, Cys-270, His-271, His-286, Cys-299, Cys-302, His-303, and His-378.

This sequence belongs to the cytochrome c-552 family. Requires Ca(2+) as cofactor. It depends on heme c as a cofactor.

It localises to the periplasm. It carries out the reaction 6 Fe(III)-[cytochrome c] + NH4(+) + 2 H2O = 6 Fe(II)-[cytochrome c] + nitrite + 8 H(+). Its pathway is nitrogen metabolism; nitrate reduction (assimilation). In terms of biological role, catalyzes the reduction of nitrite to ammonia, consuming six electrons in the process. This Shewanella frigidimarina (strain NCIMB 400) protein is Cytochrome c-552.